The primary structure comprises 429 residues: Glycine betaine monooxygenase oxygenase subunit (429 aa).

Residues 56 to 163 form the Rieske domain; the sequence is WLIAGMTCEI…VKTAGGYIFI (108 aa). Positions 98, 100, 118, and 121 each coordinate [2Fe-2S] cluster. The Fe cation site is built by H217 and H222.

The protein belongs to the bacterial ring-hydroxylating dioxygenase alpha subunit family. As to quaternary structure, the system is composed of an oxygenase subunit (GbcA) and a reductase subunit (GbcB). It depends on [2Fe-2S] cluster as a cofactor. The cofactor is Fe cation.

The catalysed reaction is glycine betaine + NADH + O2 + H(+) = N,N-dimethylglycine + formaldehyde + NAD(+) + H2O. Involved in degradation of glycine betaine. Part of a Rieske-type oxygenase system that catalyzes the conversion of glycine betaine (GB) to dimethylglycine (DMG). This subunit is the terminal oxygenase component of the system. This is Glycine betaine monooxygenase oxygenase subunit from Pseudomonas aeruginosa (strain UCBPP-PA14).